The chain runs to 783 residues: Protein DWD HYPERSENSITIVE TO UV-B 1 (783 aa).

2 WD repeats span residues 145–198 and 212–256; these read GEFT…LKLP and SDSS…DPSL. Positions 382-389 match the Nuclear localization signal motif; that stretch reads RKKESVVR. 6 WD repeats span residues 439-480, 485-525, 538-577, 581-621, 625-664, and 666-710; these read DNSR…IFRY, GSQS…STVT, DEFDQLTSVHANSTDQLFLASGYSKDVALYDIGRGTRLQV, MHQE…SRPC, SSTKGNVMVCFSPDDRYLLASAVDNEVRQLLTVDGRLHLN, and EIVP…RRLR.

Interacts directly with DDB1A. Binds to COP1 and RUP1.

The protein localises to the nucleus. May act as a substrate receptor of a CUL4-RING E3 ubiquitin-protein ligase (CRL4) complex involved in the negative regulation of cellular responses to ultraviolet-B (UV-B) illumination, likely in coordination with RUP1. Interacts with COP1 and probably prevents the formation of active UVR8-COP1 complex, thus avoiding UVR8-COP1-mediated positive regulation of UV-B responses. In Arabidopsis thaliana (Mouse-ear cress), this protein is Protein DWD HYPERSENSITIVE TO UV-B 1.